A 602-amino-acid polypeptide reads, in one-letter code: UPF0329 protein ECU02_0060 (602 aa).

Residues 313 to 345 (EEDERKRAEAESARNREELLRMEEREKGKEKGS) show a composition bias toward basic and acidic residues. Residues 313–407 (EEDERKRAEA…SPKEESKGEE (95 aa)) form a disordered region. The span at 346 to 356 (KGKGRKKRGKK) shows a compositional bias: basic residues. Basic and acidic residues predominate over residues 357-369 (GAGEAKEESKEED). The span at 370–384 (RGGEEEESVEADVPV) shows a compositional bias: acidic residues.

The protein belongs to the UPF0329 family.

The polypeptide is UPF0329 protein ECU02_0060 (Encephalitozoon cuniculi (strain GB-M1) (Microsporidian parasite)).